We begin with the raw amino-acid sequence, 360 residues long: Chorismate synthase (360 aa).

Arg-47 is a binding site for NADP(+). FMN contacts are provided by residues 124 to 126 (RAS), Gly-286, 301 to 305 (KPTAT), and Arg-327.

This sequence belongs to the chorismate synthase family. Homotetramer. Requires FMNH2 as cofactor.

The enzyme catalyses 5-O-(1-carboxyvinyl)-3-phosphoshikimate = chorismate + phosphate. The protein operates within metabolic intermediate biosynthesis; chorismate biosynthesis; chorismate from D-erythrose 4-phosphate and phosphoenolpyruvate: step 7/7. Functionally, catalyzes the anti-1,4-elimination of the C-3 phosphate and the C-6 proR hydrogen from 5-enolpyruvylshikimate-3-phosphate (EPSP) to yield chorismate, which is the branch point compound that serves as the starting substrate for the three terminal pathways of aromatic amino acid biosynthesis. This reaction introduces a second double bond into the aromatic ring system. The sequence is that of Chorismate synthase from Synechococcus sp. (strain RCC307).